The primary structure comprises 715 residues: Methionine--tRNA ligase (715 aa).

Positions 20–30 (PYANGKAHIGH) match the 'HIGH' region motif. Residues cysteine 151, cysteine 154, cysteine 163, and cysteine 167 each coordinate Zn(2+). The short motif at 334 to 338 (KFSKT) is the 'KMSKS' region element. Lysine 337 is an ATP binding site. Residues 559–593 (ANAKRNGVKGGEKEPSKSEGMGPSEASKASEKTVD) form a disordered region. One can recognise a tRNA-binding domain in the interval 613–715 (DFAKLDIRVG…KEIKSGSRIR (103 aa)).

Belongs to the class-I aminoacyl-tRNA synthetase family. MetG type 1 subfamily. As to quaternary structure, homodimer. Requires Zn(2+) as cofactor.

The protein resides in the cytoplasm. The catalysed reaction is tRNA(Met) + L-methionine + ATP = L-methionyl-tRNA(Met) + AMP + diphosphate. Is required not only for elongation of protein synthesis but also for the initiation of all mRNA translation through initiator tRNA(fMet) aminoacylation. The chain is Methionine--tRNA ligase from Methanosarcina mazei (strain ATCC BAA-159 / DSM 3647 / Goe1 / Go1 / JCM 11833 / OCM 88) (Methanosarcina frisia).